Consider the following 440-residue polypeptide: Chromosomal replication initiator protein DnaA (440 aa).

The interval 1–74 (MNPSQILENL…VQSGNKAIIN (74 aa)) is domain I, interacts with DnaA modulators. The tract at residues 74 to 99 (NIQAQSTKQSNKSTKIDIAHIQAQST) is domain II. The domain III, AAA+ region stretch occupies residues 100–316 (ILNPSFTFES…GIIISLNAYA (217 aa)). ATP contacts are provided by glycine 146, glycine 148, lysine 149, and threonine 150. The tract at residues 317–440 (TILGQEITLE…KNKILIKSQS (124 aa)) is domain IV, binds dsDNA.

The protein belongs to the DnaA family. Oligomerizes as a right-handed, spiral filament on DNA at oriC.

The protein localises to the cytoplasm. In terms of biological role, plays an essential role in the initiation and regulation of chromosomal replication. ATP-DnaA binds to the origin of replication (oriC) to initiate formation of the DNA replication initiation complex once per cell cycle. Binds the DnaA box (a 9 base pair repeat at the origin) and separates the double-stranded (ds)DNA. Forms a right-handed helical filament on oriC DNA; dsDNA binds to the exterior of the filament while single-stranded (ss)DNA is stabiized in the filament's interior. The ATP-DnaA-oriC complex binds and stabilizes one strand of the AT-rich DNA unwinding element (DUE), permitting loading of DNA polymerase. After initiation quickly degrades to an ADP-DnaA complex that is not apt for DNA replication. Binds acidic phospholipids. In Campylobacter jejuni subsp. doylei (strain ATCC BAA-1458 / RM4099 / 269.97), this protein is Chromosomal replication initiator protein DnaA.